A 189-amino-acid polypeptide reads, in one-letter code: 3-isopropylmalate dehydratase small subunit (189 aa).

Belongs to the LeuD family. LeuD type 1 subfamily. Heterodimer of LeuC and LeuD.

The enzyme catalyses (2R,3S)-3-isopropylmalate = (2S)-2-isopropylmalate. Its pathway is amino-acid biosynthesis; L-leucine biosynthesis; L-leucine from 3-methyl-2-oxobutanoate: step 2/4. Functionally, catalyzes the isomerization between 2-isopropylmalate and 3-isopropylmalate, via the formation of 2-isopropylmaleate. The sequence is that of 3-isopropylmalate dehydratase small subunit from Francisella philomiragia subsp. philomiragia (strain ATCC 25017 / CCUG 19701 / FSC 153 / O#319-036).